Reading from the N-terminus, the 984-residue chain is Detocs histidine-protein kinase DtcA (984 aa).

Residue His645 is modified to Phosphohistidine; by autocatalysis.

Autophosphorylated.

It carries out the reaction ATP + protein L-histidine = ADP + protein N-phospho-L-histidine.. Its function is as follows. Sensor-kinase member of the two-component regulatory system Detocs that confers resistance to bacteriophage. When the system (DtcA-DtcB-DtcC) is expressed in a susceptible E.coli (strain MG1655) it confers resistance to bacteriophages T2, T4, T5, T6 and SECphi27. Detocs inhibits T5 infection leading to growth arrest but not complete cell lysis, during SECphi27 infection leads to cell lysis. DtcA (this subunit) probably autophosphorylates upon sensing viral infection, and subsequently transfers the phosphate signal to DtcC which activates it, leading to an antiviral defense; DtcB may scavenge phosphorylation signals from accidental activation of DtcA. The polypeptide is Detocs histidine-protein kinase DtcA (Vibrio alginolyticus).